An 877-amino-acid chain; its full sequence is Phosphoenolpyruvate carboxylase (877 aa).

Residues histidine 138 and lysine 544 contribute to the active site.

This sequence belongs to the PEPCase type 1 family. Requires Mg(2+) as cofactor.

It carries out the reaction oxaloacetate + phosphate = phosphoenolpyruvate + hydrogencarbonate. Forms oxaloacetate, a four-carbon dicarboxylic acid source for the tricarboxylic acid cycle. This chain is Phosphoenolpyruvate carboxylase, found in Vibrio parahaemolyticus serotype O3:K6 (strain RIMD 2210633).